The following is a 514-amino-acid chain: HMG box-containing protein 1 (514 aa).

Residues 150-182 (ARPPPVSSSSKSEPAFPHHHWKEETPVRHERAN) form a disordered region. Residues 170–182 (WKEETPVRHERAN) show a composition bias toward basic and acidic residues. An AXH domain is found at 203 to 345 (WCNSWPSTVW…PPGHLDAINF (143 aa)). The segment at residues 434–502 (CKRPMNAFML…EQKRLNPDCW (69 aa)) is a DNA-binding region (HMG box).

Binds TCF4. Binds RB1. Binds the second PAH repeat of SIN3A. Post-translationally, ubiquitinated by the CTLH E3 ubiquitin-protein ligase complex, leading to subsequent proteasomal degradation.

The protein resides in the nucleus. Its function is as follows. Transcriptional repressor that binds to the promoter region of target genes. Plays a role in the regulation of the cell cycle and of the Wnt pathway. Binds preferentially to the sequence 5'-TTCATTCATTCA-3'. Binding to the histone H1.0 promoter is enhanced by interaction with RB1. Disrupts the interaction between DNA and TCF4. The protein is HMG box-containing protein 1 (HBP1) of Pongo abelii (Sumatran orangutan).